Here is a 502-residue protein sequence, read N- to C-terminus: Bifunctional purine biosynthesis protein PurH (502 aa).

The 144-residue stretch at 1–144 (MKKRALISVF…KNFQDVVVIS (144 aa)) folds into the MGS-like domain.

This sequence belongs to the PurH family.

The catalysed reaction is (6R)-10-formyltetrahydrofolate + 5-amino-1-(5-phospho-beta-D-ribosyl)imidazole-4-carboxamide = 5-formamido-1-(5-phospho-D-ribosyl)imidazole-4-carboxamide + (6S)-5,6,7,8-tetrahydrofolate. It carries out the reaction IMP + H2O = 5-formamido-1-(5-phospho-D-ribosyl)imidazole-4-carboxamide. The protein operates within purine metabolism; IMP biosynthesis via de novo pathway; 5-formamido-1-(5-phospho-D-ribosyl)imidazole-4-carboxamide from 5-amino-1-(5-phospho-D-ribosyl)imidazole-4-carboxamide (10-formyl THF route): step 1/1. Its pathway is purine metabolism; IMP biosynthesis via de novo pathway; IMP from 5-formamido-1-(5-phospho-D-ribosyl)imidazole-4-carboxamide: step 1/1. In Clostridium beijerinckii (strain ATCC 51743 / NCIMB 8052) (Clostridium acetobutylicum), this protein is Bifunctional purine biosynthesis protein PurH.